A 186-amino-acid polypeptide reads, in one-letter code: Negative modulator of initiation of replication (186 aa).

It belongs to the SeqA family. Homodimer. Polymerizes to form helical filaments.

The protein resides in the cytoplasm. Negative regulator of replication initiation, which contributes to regulation of DNA replication and ensures that replication initiation occurs exactly once per chromosome per cell cycle. Binds to pairs of hemimethylated GATC sequences in the oriC region, thus preventing assembly of replication proteins and re-initiation at newly replicated origins. Repression is relieved when the region becomes fully methylated. In Haemophilus ducreyi (strain 35000HP / ATCC 700724), this protein is Negative modulator of initiation of replication.